Reading from the N-terminus, the 559-residue chain is Glucosylglycerate phosphorylase (559 aa).

D229 serves as the catalytic Nucleophile.

The protein belongs to the glycosyl hydrolase 13 family. Glucosylglycerate phosphorylase subfamily.

It carries out the reaction (2R)-2-O-(alpha-D-glucopyranosyl)-glycerate + phosphate = (R)-glycerate + alpha-D-glucose 1-phosphate. In terms of biological role, catalyzes the reversible phosphorolysis of glucosylglycerate into alpha-D-glucose 1-phosphate (Glc1P) and D-glycerate (also called (R)-glycerate). May be a regulator of intracellular levels of glucosylglycerate, a compatible solute that primarily protects organisms facing salt stress and very specific nutritional constraints. Cannot catalyze the phosphorolysis of sucrose. Does not act on other sugars such as alpha-D-galactose 1-phosphate, alpha-D-mannose 1-phosphate or beta-D-glucose 1-phosphate; in vitro D-erythronate can substitute for D-glycerate with a much lower efficiency. This chain is Glucosylglycerate phosphorylase (ycjM), found in Escherichia coli (strain K12).